The sequence spans 497 residues: Subtilisin-like protease CPC735_031240 (497 aa).

Positions 1 to 16 (MKGVLSLSLLPLLAAP) are cleaved as a signal peptide. Residues 17-136 (SPILVDTIHR…IEKDSEVHAW (120 aa)) constitute a propeptide that is removed on maturation. Residues 43 to 134 (SYIVVFKKNV…QYIEKDSEVH (92 aa)) enclose the Inhibitor I9 domain. Positions 146 to 452 (PWGLARVSHR…GGSSNYTAII (307 aa)) constitute a Peptidase S8 domain. Residues Asp-182 and His-214 each act as charge relay system in the active site. N-linked (GlcNAc...) asparagine glycosylation is found at Asn-244 and Asn-284. Ser-380 acts as the Charge relay system in catalysis. Asn-447 carries an N-linked (GlcNAc...) asparagine glycan.

The protein belongs to the peptidase S8 family.

Its subcellular location is the secreted. Secreted subtilisin-like serine protease with keratinolytic activity that contributes to pathogenicity. In Coccidioides posadasii (strain C735) (Valley fever fungus), this protein is Subtilisin-like protease CPC735_031240.